Consider the following 198-residue polypeptide: Probable nicotinate-nucleotide adenylyltransferase (198 aa).

Belongs to the NadD family.

It carries out the reaction nicotinate beta-D-ribonucleotide + ATP + H(+) = deamido-NAD(+) + diphosphate. It functions in the pathway cofactor biosynthesis; NAD(+) biosynthesis; deamido-NAD(+) from nicotinate D-ribonucleotide: step 1/1. Catalyzes the reversible adenylation of nicotinate mononucleotide (NaMN) to nicotinic acid adenine dinucleotide (NaAD). This Albidiferax ferrireducens (strain ATCC BAA-621 / DSM 15236 / T118) (Rhodoferax ferrireducens) protein is Probable nicotinate-nucleotide adenylyltransferase.